The following is a 203-amino-acid chain: Ribonuclease HII (203 aa).

The RNase H type-2 domain maps to 18–203 (GQYAGVDEVG…SFRPVREALA (186 aa)). Residues Asp24, Glu25, and Asp116 each coordinate a divalent metal cation.

The protein belongs to the RNase HII family. Mn(2+) is required as a cofactor. Requires Mg(2+) as cofactor.

The protein localises to the cytoplasm. The catalysed reaction is Endonucleolytic cleavage to 5'-phosphomonoester.. Endonuclease that specifically degrades the RNA of RNA-DNA hybrids. This chain is Ribonuclease HII, found in Shewanella pealeana (strain ATCC 700345 / ANG-SQ1).